The chain runs to 63 residues: Large ribosomal subunit protein bL28 (63 aa).

This sequence belongs to the bacterial ribosomal protein bL28 family.

The chain is Large ribosomal subunit protein bL28 from Desulfitobacterium hafniense (strain DSM 10664 / DCB-2).